We begin with the raw amino-acid sequence, 191 residues long: Prophage tail fiber assembly protein homolog TfaR (191 aa).

This sequence belongs to the tfa family.

The protein is Prophage tail fiber assembly protein homolog TfaR (tfaR) of Escherichia coli (strain K12).